Consider the following 428-residue polypeptide: Spliceosome RNA helicase DDX39B (428 aa).

Residues 1-19 (MAENDVDNELLDYEEDEVE) are compositionally biased toward acidic residues. The disordered stretch occupies residues 1 to 35 (MAENDVDNELLDYEEDEVENAAGGDGSEAPPKKDV). The Q motif motif lies at 45 to 73 (SGFRDFLLKPELLRAIVDCGFEHPSEVQH). In terms of domain architecture, Helicase ATP-binding spans 76–249 (IPQAILGMDV…RKFMQDPMEI (174 aa)). 89 to 96 (AKSGMGKT) serves as a coordination point for ATP. A DECD box motif is present at residues 196 to 199 (DECD). Residues 261–422 (GLQQYYVKLK…ELPDEIDISS (162 aa)) enclose the Helicase C-terminal domain.

Belongs to the DEAD box helicase family. DECD subfamily. In terms of assembly, component of the transcription/export (TREX) complex at least composed of ALYREF/THOC4, DDX39B, SARNP/CIP29, CHTOP and the THO subcomplex.

The protein localises to the nucleus. The protein resides in the nucleus speckle. The enzyme catalyses ATP + H2O = ADP + phosphate + H(+). Involved in nuclear export of spliced and unspliced mRNA. Component of the TREX complex which is thought to couple mRNA transcription, processing and nuclear export, and specifically associates with spliced mRNA and not with unspliced pre-mRNA. The TREX complex is recruited to spliced mRNAs by a transcription-independent mechanism, binds to mRNA upstream of the exon-junction complex (EJC) and is recruited in a splicing- and cap-dependent manner to a region near the 5' end of the mRNA where it functions in mRNA export to the cytoplasm via the TAP/NXF1 pathway. Involved in transcription elongation and genome stability. In terms of biological role, splice factor that is required for the first ATP-dependent step in spliceosome assembly and for the interaction of U2 snRNP with the branchpoint. Has both RNA-stimulated ATP binding/hydrolysis activity and ATP-dependent RNA unwinding activity. Even with the stimulation of RNA, the ATPase activity is weak. Can only hydrolyze ATP but not other NTPs. The RNA stimulation of ATPase activity does not have a strong preference for the sequence and length of the RNA. However, ssRNA stimulates the ATPase activity much more strongly than dsRNA. Can unwind 5' or 3' overhangs or blunt end RNA duplexes in vitro. The ATPase and helicase activities are not influenced by U2AF2; the effect of ALYREF/THOC4 is reported conflictingly. The polypeptide is Spliceosome RNA helicase DDX39B (DDX39B) (Gallus gallus (Chicken)).